A 232-amino-acid chain; its full sequence is Phosphatidylserine decarboxylase proenzyme (232 aa).

The active-site Schiff-base intermediate with substrate; via pyruvic acid is serine 190. Pyruvic acid (Ser); by autocatalysis is present on serine 190.

This sequence belongs to the phosphatidylserine decarboxylase family. PSD-A subfamily. As to quaternary structure, heterodimer of a large membrane-associated beta subunit and a small pyruvoyl-containing alpha subunit. The cofactor is pyruvate. In terms of processing, is synthesized initially as an inactive proenzyme. Formation of the active enzyme involves a self-maturation process in which the active site pyruvoyl group is generated from an internal serine residue via an autocatalytic post-translational modification. Two non-identical subunits are generated from the proenzyme in this reaction, and the pyruvate is formed at the N-terminus of the alpha chain, which is derived from the carboxyl end of the proenzyme. The post-translation cleavage follows an unusual pathway, termed non-hydrolytic serinolysis, in which the side chain hydroxyl group of the serine supplies its oxygen atom to form the C-terminus of the beta chain, while the remainder of the serine residue undergoes an oxidative deamination to produce ammonia and the pyruvoyl prosthetic group on the alpha chain.

It is found in the cell membrane. It catalyses the reaction a 1,2-diacyl-sn-glycero-3-phospho-L-serine + H(+) = a 1,2-diacyl-sn-glycero-3-phosphoethanolamine + CO2. Its pathway is phospholipid metabolism; phosphatidylethanolamine biosynthesis; phosphatidylethanolamine from CDP-diacylglycerol: step 2/2. Its function is as follows. Catalyzes the formation of phosphatidylethanolamine (PtdEtn) from phosphatidylserine (PtdSer). The sequence is that of Phosphatidylserine decarboxylase proenzyme from Allorhizobium ampelinum (strain ATCC BAA-846 / DSM 112012 / S4) (Agrobacterium vitis (strain S4)).